The sequence spans 253 residues: Putative glutamine amidotransferase PB2B2.05 (253 aa).

Positions 5–228 (IIALSVGFSN…INRSKWHMKQ (224 aa)) constitute a Glutamine amidotransferase type-1 domain. Cysteine 100 acts as the Nucleophile in catalysis. Catalysis depends on residues histidine 200 and glutamate 202.

It localises to the cytoplasm. Its subcellular location is the nucleus. This is Putative glutamine amidotransferase PB2B2.05 from Schizosaccharomyces pombe (strain 972 / ATCC 24843) (Fission yeast).